The following is a 156-amino-acid chain: C-type lectin lectoxin-Phi1 (156 aa).

The N-terminal stretch at 1–23 is a signal peptide; that stretch reads MGRFIFVSLGLLVLAFSLSGIGA. 3 disulfide bridges follow: cysteine 27–cysteine 38, cysteine 55–cysteine 154, and cysteine 129–cysteine 146. Positions 34–155 constitute a C-type lectin domain; the sequence is HNVSCYKLIN…CNRRHRFLCK (122 aa). Residues asparagine 35 and asparagine 109 are each glycosylated (N-linked (GlcNAc...) asparagine). A Mannose-binding motif is present at residues 119–121; the sequence is EPN. 3 residues coordinate Ca(2+): glutamate 127, asparagine 142, and aspartate 143.

It belongs to the true venom lectin family. As to expression, expressed by the venom gland.

Its subcellular location is the secreted. In terms of biological role, mannose-binding lectin which recognizes specific carbohydrate structures and agglutinates a variety of animal cells by binding to cell-surface glycoproteins and glycolipids. May be a calcium-dependent lectin. The chain is C-type lectin lectoxin-Phi1 from Philodryas olfersii (Green snake).